The following is a 274-amino-acid chain: Elongation factor Ts (274 aa).

Residues 79-82 (TDFV) form an involved in Mg(2+) ion dislocation from EF-Tu region.

The protein belongs to the EF-Ts family.

It is found in the cytoplasm. In terms of biological role, associates with the EF-Tu.GDP complex and induces the exchange of GDP to GTP. It remains bound to the aminoacyl-tRNA.EF-Tu.GTP complex up to the GTP hydrolysis stage on the ribosome. This chain is Elongation factor Ts, found in Aster yellows witches'-broom phytoplasma (strain AYWB).